The following is a 601-amino-acid chain: Glutathione-regulated potassium-efflux system protein KefB (601 aa).

The next 13 membrane-spanning stretches (helical) occupy residues 4-24, 29-49, 55-75, 87-107, 111-131, 152-172, 177-197, 207-227, 230-250, 262-282, 284-304, 324-344, and 356-376; these read ADLL…VPLA, IGAV…GLGF, EILH…GLEL, IFGV…GLLM, FLWQ…TAMA, VLLF…LLAG, HFDW…LIGG, FIAA…LVLS, LFMD…GVLL, AIDP…GMSL, LGVL…LVVI, MQFA…FSTA, and ALLL…MKGI. One can recognise an RCK N-terminal domain in the interval 400 to 519; it reads KPQVIVVGFG…AGVTQFSRET (120 aa).

Belongs to the monovalent cation:proton antiporter 2 (CPA2) transporter (TC 2.A.37) family. KefB subfamily. In terms of assembly, interacts with the regulatory subunit KefG.

Its subcellular location is the cell inner membrane. Its function is as follows. Pore-forming subunit of a potassium efflux system that confers protection against electrophiles. Catalyzes K(+)/H(+) antiport. The sequence is that of Glutathione-regulated potassium-efflux system protein KefB from Salmonella paratyphi C (strain RKS4594).